The primary structure comprises 988 residues: Echinoderm microtubule-associated protein-like 4 (988 aa).

N-acetylmethionine is present on M1. Residues 1 to 260 (MDGFAGSLDD…IPSDVDNYDD (260 aa)) are microtubule-binding. A phosphoserine mark is found at S7, S13, S16, S61, and S79. Residues 14–63 (AASTSDVQDRLSALESRVQQQEDEITVLKAALADVLRRLAISEDHVASVK) adopt a coiled-coil conformation. The residue at position 96 (T96) is a Phosphothreonine. The segment at 106-194 (TLSSAAKSGT…WENSDDSRNK (89 aa)) is disordered. The span at 114 to 134 (GTEKKKEKPQGQREKKEDSHS) shows a compositional bias: basic and acidic residues. At S134 the chain carries Phosphoserine; by NEK7. Residues 137–155 (QSPQIRASPSPQPSSQPLQ) are compositionally biased toward low complexity. S144 carries the post-translational modification Phosphoserine; by NEK6. Phosphoserine; by NEK7 is present on S146. Residues 156-168 (INRQTPESKSSAP) show a composition bias toward polar residues. Position 171 is a phosphoserine (S171). Basic and acidic residues predominate over residues 176–193 (PTAEKSHNSWENSDDSRN). S200 carries the post-translational modification Phosphoserine. A Phosphothreonine modification is found at T201. Residue Y237 is modified to Phosphotyrosine. T248 bears the Phosphothreonine mark. WD repeat units follow at residues 270–308 (LKLE…LFNY), 312–359 (TQRH…VWDS), 367–407 (VIGL…VWDW), 414–449 (AEIK…FWTW), 456–495 (RKQG…IWSK), 511–549 (QINR…LWDH), 554–590 (EREI…LRGT), 593–632 (DGFQ…MWNS), 636–673 (RLEW…VLDA), 679–715 (VSIH…LYTV), 722–761 (YSRY…YWDI), 771–829 (RSDC…LFQY), and 836–875 (APSH…QWKL). T620 is modified (phosphothreonine; by NEK6 and NEK7). The segment at 887–988 (ITDASVTKTP…EEERGITPLC (102 aa)) is disordered. Residues 890–904 (ASVTKTPASSSETAR) are compositionally biased toward polar residues. Phosphoserine occurs at positions 906, 908, and 914. Residues 927-939 (MGSSPTLVENSLE) show a composition bias toward polar residues. The span at 944–953 (PSEEQSEWGS) shows a compositional bias: acidic residues.

This sequence belongs to the WD repeat EMAP family. As to quaternary structure, homotrimer; self-association is mediated by the N-terminal coiled coil. Interacts (via WD repeats) with NUDC. Interacts with alpha- and beta-tubulin during mitosis. In terms of processing, phosphorylated during mitosis. Phosphorylation at Ser-144 and Ser-146 promotes its dissociation from microtubules during mitosis which is required for efficient chromosome congression.

Its subcellular location is the cytoplasm. The protein localises to the cytoskeleton. It is found in the spindle. The protein resides in the microtubule organizing center. It localises to the midbody. Essential for the stability of microtubules (MTs). Essential for the formation of MTs. Required for the organization of the mitotic spindle and for the proper attachment of kinetochores to MTs. Promotes the recruitment of NUDC to the mitotic spindle for mitotic progression. This Mus musculus (Mouse) protein is Echinoderm microtubule-associated protein-like 4 (Eml4).